The chain runs to 549 residues: Glucose-6-phosphate isomerase (549 aa).

Glu355 serves as the catalytic Proton donor. Catalysis depends on residues His386 and Lys514.

This sequence belongs to the GPI family.

It localises to the cytoplasm. The enzyme catalyses alpha-D-glucose 6-phosphate = beta-D-fructose 6-phosphate. Its pathway is carbohydrate biosynthesis; gluconeogenesis. The protein operates within carbohydrate degradation; glycolysis; D-glyceraldehyde 3-phosphate and glycerone phosphate from D-glucose: step 2/4. Catalyzes the reversible isomerization of glucose-6-phosphate to fructose-6-phosphate. This Salmonella paratyphi C (strain RKS4594) protein is Glucose-6-phosphate isomerase.